The following is an 868-amino-acid chain: Probable inorganic carbon transporter subunit DabA (868 aa).

Zn(2+) is bound by residues Cys-392, Asp-394, His-574, and Cys-589.

This sequence belongs to the inorganic carbon transporter (TC 9.A.2) DabA family. In terms of assembly, forms a complex with DabB. It depends on Zn(2+) as a cofactor.

It is found in the cell membrane. In terms of biological role, part of an energy-coupled inorganic carbon pump. The polypeptide is Probable inorganic carbon transporter subunit DabA (Bacillus cereus (strain G9842)).